A 173-amino-acid polypeptide reads, in one-letter code: Lipoprotein signal peptidase (173 aa).

3 helical membrane-spanning segments follow: residues 12–32 (WLWL…WTIQ), 67–87 (WQRY…VYLL), and 102–122 (ALIL…GYVI). Catalysis depends on residues Asp123 and Asp141. Residues 137 to 157 (FNIADSAIFTGAVIMIFESFF) traverse the membrane as a helical segment.

Belongs to the peptidase A8 family.

The protein resides in the cell inner membrane. It catalyses the reaction Release of signal peptides from bacterial membrane prolipoproteins. Hydrolyzes -Xaa-Yaa-Zaa-|-(S,diacylglyceryl)Cys-, in which Xaa is hydrophobic (preferably Leu), and Yaa (Ala or Ser) and Zaa (Gly or Ala) have small, neutral side chains.. It functions in the pathway protein modification; lipoprotein biosynthesis (signal peptide cleavage). In terms of biological role, this protein specifically catalyzes the removal of signal peptides from prolipoproteins. In Psychromonas ingrahamii (strain DSM 17664 / CCUG 51855 / 37), this protein is Lipoprotein signal peptidase.